Reading from the N-terminus, the 1088-residue chain is RNA-directed RNA polymerase (1088 aa).

One can recognise a RdRp catalytic domain in the interval 501 to 687 (LSYGDVTRFL…AKRYIAGGKI (187 aa)).

The protein belongs to the reoviridae RNA-directed RNA polymerase family. As to quaternary structure, interacts with VP3 (Potential). Interacts with VP2; this interaction activates VP1. Interacts with NSP5; this interaction is probably necessary for the formation of functional virus factories. Interacts with NSP2; this interaction is weak. Mg(2+) serves as cofactor.

Its subcellular location is the virion. The catalysed reaction is RNA(n) + a ribonucleoside 5'-triphosphate = RNA(n+1) + diphosphate. RNA-directed RNA polymerase that is involved in both transcription and genome replication. Together with VP3 capping enzyme, forms an enzyme complex positioned near the channels situated at each of the five-fold vertices of the core. Following infection, the outermost layer of the virus is lost, leaving a double-layered particle (DLP) made up of the core and VP6 shell. VP1 then catalyzes the transcription of fully conservative plus-strand genomic RNAs that are extruded through the DLP's channels into the cytoplasm where they function as mRNAs for translation of viral proteins. One copy of each of the viral (+)RNAs is also recruited during core assembly, together with newly synthesized polymerase complexes and VP2. The polymerase of these novo-formed particles catalyzes the synthesis of complementary minus-strands leading to dsRNA formation. To do so, the polymerase specifically recognizes and binds 4 bases 5'-UGUG-3' in the conserved 3'-sequence of plus-strand RNA templates. VP2 presumably activates the autoinhibited VP1-RNA complex to coordinate packaging and genome replication. Once dsRNA synthesis is complete, the polymerase switches to the transcriptional mode, thus providing secondary transcription. This chain is RNA-directed RNA polymerase, found in Homo sapiens (Human).